The chain runs to 196 residues: Putative NADH dehydrogenase/NAD(P)H nitroreductase XCV0587 (196 aa).

Belongs to the nitroreductase family. HadB/RutE subfamily. FMN is required as a cofactor.

The protein is Putative NADH dehydrogenase/NAD(P)H nitroreductase XCV0587 of Xanthomonas euvesicatoria pv. vesicatoria (strain 85-10) (Xanthomonas campestris pv. vesicatoria).